Consider the following 451-residue polypeptide: D-ribitol-5-phosphate cytidylyltransferase (451 aa).

Residues 1–29 (MEAGPPGSARPAEPGPCLSGQRGADHTAS) are disordered.

The protein belongs to the IspD/TarI cytidylyltransferase family. IspD subfamily. Homodimer. As to expression, ubiquitously expressed, with high expression in brain.

The protein resides in the cytoplasm. The protein localises to the cytosol. It catalyses the reaction D-ribitol 5-phosphate + CTP + H(+) = CDP-L-ribitol + diphosphate. The catalysed reaction is D-ribose 5-phosphate + CTP + H(+) = CDP-D-ribose + diphosphate. The enzyme catalyses D-ribulose 5-phosphate + CTP + H(+) = CDP-D-ribulose + diphosphate. It participates in protein modification; protein glycosylation. Its function is as follows. Cytidylyltransferase required for protein O-linked mannosylation. Catalyzes the formation of CDP-ribitol nucleotide sugar from D-ribitol 5-phosphate. CDP-ribitol is a substrate of FKTN during the biosynthesis of the phosphorylated O-mannosyl trisaccharide (N-acetylgalactosamine-beta-3-N-acetylglucosamine-beta-4-(phosphate-6-)mannose), a carbohydrate structure present in alpha-dystroglycan (DAG1), which is required for binding laminin G-like domain-containing extracellular proteins with high affinity. Shows activity toward other pentose phosphate sugars and mediates formation of CDP-ribulose or CDP-ribose using CTP and ribulose-5-phosphate or ribose-5-phosphate, respectively. Not Involved in dolichol production. The chain is D-ribitol-5-phosphate cytidylyltransferase from Homo sapiens (Human).